The following is a 502-amino-acid chain: ATP synthase subunit alpha (502 aa).

169–176 (GDRQTGKT) is a binding site for ATP.

The protein belongs to the ATPase alpha/beta chains family. As to quaternary structure, F-type ATPases have 2 components, CF(1) - the catalytic core - and CF(0) - the membrane proton channel. CF(1) has five subunits: alpha(3), beta(3), gamma(1), delta(1), epsilon(1). CF(0) has three main subunits: a(1), b(2) and c(9-12). The alpha and beta chains form an alternating ring which encloses part of the gamma chain. CF(1) is attached to CF(0) by a central stalk formed by the gamma and epsilon chains, while a peripheral stalk is formed by the delta and b chains.

It is found in the cell inner membrane. The catalysed reaction is ATP + H2O + 4 H(+)(in) = ADP + phosphate + 5 H(+)(out). Its function is as follows. Produces ATP from ADP in the presence of a proton gradient across the membrane. The alpha chain is a regulatory subunit. The polypeptide is ATP synthase subunit alpha (Solidesulfovibrio magneticus (strain ATCC 700980 / DSM 13731 / RS-1) (Desulfovibrio magneticus)).